Reading from the N-terminus, the 75-residue chain is Protease B inhibitor 1 (75 aa).

Thr-74 bears the Phosphothreonine mark.

Belongs to the protease inhibitor I9 family. Part of the heterodimeric LMA1 complex together with the thioredoxin II/TRX2. LMA1 binds to the ATPase SEC18.

The protein localises to the cytoplasm. It is found in the nucleus. Its function is as follows. Cytosolic inhibitor of vacuolar proteinase B (yscB), probably regulating protease B activity during limited proteolysis. PBI2 is a component of the LMA1 complex, which is involved in the facilitation of vesicle fusion such as homotypic vacuole and ER-derived COPII vesicle fusion with the Golgi. This Saccharomyces cerevisiae (Baker's yeast) protein is Protease B inhibitor 1 (PBI2).